The following is a 416-amino-acid chain: UDP-N-acetylglucosamine 1-carboxyvinyltransferase (416 aa).

Phosphoenolpyruvate is bound at residue 22-23; sequence KN. Arg92 is a binding site for UDP-N-acetyl-alpha-D-glucosamine. Catalysis depends on Cys116, which acts as the Proton donor. Cys116 carries the 2-(S-cysteinyl)pyruvic acid O-phosphothioketal modification. Residues 121–125, Asp304, and Ile326 each bind UDP-N-acetyl-alpha-D-glucosamine; that span reads RPIDQ.

Belongs to the EPSP synthase family. MurA subfamily.

It is found in the cytoplasm. It catalyses the reaction phosphoenolpyruvate + UDP-N-acetyl-alpha-D-glucosamine = UDP-N-acetyl-3-O-(1-carboxyvinyl)-alpha-D-glucosamine + phosphate. It functions in the pathway cell wall biogenesis; peptidoglycan biosynthesis. Cell wall formation. Adds enolpyruvyl to UDP-N-acetylglucosamine. In Desulfatibacillum aliphaticivorans, this protein is UDP-N-acetylglucosamine 1-carboxyvinyltransferase.